The sequence spans 336 residues: Fructose-1,6-bisphosphatase class 1 (336 aa).

Residues E90, D112, L114, and D115 each contribute to the Mg(2+) site. Substrate is bound by residues 115–118, N207, and K273; that span reads DGSS. E279 serves as a coordination point for Mg(2+).

This sequence belongs to the FBPase class 1 family. As to quaternary structure, homotetramer. It depends on Mg(2+) as a cofactor.

Its subcellular location is the cytoplasm. It catalyses the reaction beta-D-fructose 1,6-bisphosphate + H2O = beta-D-fructose 6-phosphate + phosphate. It functions in the pathway carbohydrate biosynthesis; gluconeogenesis. This Xanthomonas euvesicatoria pv. vesicatoria (strain 85-10) (Xanthomonas campestris pv. vesicatoria) protein is Fructose-1,6-bisphosphatase class 1.